The primary structure comprises 838 residues: MKVSRVLALVLGAVIPAHAAFSWKNVKLGGGGGFVPGIIFHPKTKGVAYARTDIGGLYRLNADDSWTAVTDGIADNAGWHNWGIDAVALDPQDDQKVYAAVGMYTNSWDPSNGAIIRSSDRGATWSFTNLPFKVGGNMPGRGAGERLAVDPANSNIIYFGARSGNGLWKSTDGGVTFSKVSSFTATGTYIPDPSDSNGYNSDKQGLMWVTFDSTSSTTGGATSRIFVGTADNITASVYVSTNAGSTWSAVPGQPGKYFPHKAKLQPAEKALYLTYSDGTGPYDGTLGSVWRYDIAGGTWKDITPVSGSDLYFGFGGLGLDLQKPGTLVVASLNSWWPDAQLFRSTDSGTTWSPIWAWASYPTETYYYSISTPKAPWIKNNFIDVTSESPSDGLIKRLGWMIESLEIDPTDSNHWLYGTGMTIFGGHDLTNWDTRHNVSIQSLADGIEEFSVQDLASAPGGSELLAAVGDDNGFTFASRNDLGTSPQTVWATPTWATSTSVDYAGNSVKSVVRVGNTAGTQQVAISSDGGATWSIDYAADTSMNGGTVAYSADGDTILWSTASSGVQRSQFQGSFASVSSLPAGAVIASDKKTNSVFYAGSGSTFYVSKDTGSSFTRGPKLGSAGTIRDIAAHPTTAGTLYVSTDVGIFRSTDSGTTFGQVSTALTNTYQIALGVGSGSNWNLYAFGTGPSGARLYASGDSGASWTDIQGSQGFGSIDSTKVAGSGSTAGQVYVGTNGRGVFYAQGTVGGGTGGTSSSTKQSSSSTSSASSSTTLRSSVVSTTRASTVTSSRTSSAAGPTGSGVAGHYAQCGGIGWTGPTQCVAPYVCQKQNDYYYQCV.

The N-terminal stretch at 1-19 is a signal peptide; it reads MKVSRVLALVLGAVIPAHA. Aspartate 53 functions as the Nucleophile in the catalytic mechanism. N-linked (GlcNAc...) asparagine glycosylation is found at asparagine 232 and asparagine 436. The active-site Proton donor is aspartate 469. The segment at 750–801 is disordered; that stretch reads GTGGTSSSTKQSSSSTSSASSSTTLRSSVVSTTRASTVTSSRTSSAAGPTGS. Over residues 754 to 797 the composition is skewed to low complexity; that stretch reads TSSSTKQSSSSTSSASSSTTLRSSVVSTTRASTVTSSRTSSAAG. Residues 802 to 838 enclose the CBM1 domain; that stretch reads GVAGHYAQCGGIGWTGPTQCVAPYVCQKQNDYYYQCV.

Belongs to the glycosyl hydrolase 74 family.

The catalysed reaction is Hydrolysis of (1-&gt;4)-D-glucosidic linkages in xyloglucans so as to successively remove oligosaccharides from the newly-formed chain end after endo-initiation on a polymer molecule.. Its function is as follows. Hydrolyzes the glucosidic bonds of unbranched Glc residues in tamarind seed xyloglucan, producing XXXG, XLXG, XXLG and XLLG. Has a low activity against beta-glucan and carboxymethylcellulose. Not active against Avicel, laminarin, xylan, galactomannan, linear and branched arabinans, galactan, polygalacturonic acid, starch, beta-D-Glcp, beta-D-cellobiose, beta-D-Galp, beta-D-Xylp, alpha-D-Xylp, alpha-L-Araf and alpha-L-Arap. The protein is Xyloglucanase of Hypocrea jecorina (strain QM6a) (Trichoderma reesei).